The following is a 387-amino-acid chain: N-acetyldiaminopimelate deacetylase (387 aa).

D75 is a catalytic residue. Residue E134 is the Proton acceptor of the active site.

It belongs to the peptidase M20A family. N-acetyldiaminopimelate deacetylase subfamily.

The catalysed reaction is N-acetyl-(2S,6S)-2,6-diaminopimelate + H2O = (2S,6S)-2,6-diaminopimelate + acetate. The protein operates within amino-acid biosynthesis; L-lysine biosynthesis via DAP pathway; LL-2,6-diaminopimelate from (S)-tetrahydrodipicolinate (acetylase route): step 3/3. Functionally, catalyzes the conversion of N-acetyl-diaminopimelate to diaminopimelate and acetate. This is N-acetyldiaminopimelate deacetylase from Leuconostoc citreum (strain KM20).